The following is a 274-amino-acid chain: 2,3,4,5-tetrahydropyridine-2,6-dicarboxylate N-succinyltransferase (274 aa).

2 residues coordinate substrate: Arg106 and Asp143.

It belongs to the transferase hexapeptide repeat family. In terms of assembly, homotrimer.

It localises to the cytoplasm. It carries out the reaction (S)-2,3,4,5-tetrahydrodipicolinate + succinyl-CoA + H2O = (S)-2-succinylamino-6-oxoheptanedioate + CoA. The protein operates within amino-acid biosynthesis; L-lysine biosynthesis via DAP pathway; LL-2,6-diaminopimelate from (S)-tetrahydrodipicolinate (succinylase route): step 1/3. In Rickettsia felis (strain ATCC VR-1525 / URRWXCal2) (Rickettsia azadi), this protein is 2,3,4,5-tetrahydropyridine-2,6-dicarboxylate N-succinyltransferase.